The following is an 826-amino-acid chain: DNA mismatch repair protein MutS (826 aa).

Gly622–Ser629 lines the ATP pocket.

It belongs to the DNA mismatch repair MutS family.

This protein is involved in the repair of mismatches in DNA. It is possible that it carries out the mismatch recognition step. This protein has a weak ATPase activity. In Chlamydia abortus (strain DSM 27085 / S26/3) (Chlamydophila abortus), this protein is DNA mismatch repair protein MutS.